We begin with the raw amino-acid sequence, 114 residues long: Biofilm growth-associated repressor (114 aa).

Residues 17 to 111 (DMEKRANEVA…ALYTIFCTQE (95 aa)) form the HTH arsR-type domain. A DNA-binding region (H-T-H motif) is located at residues 51-74 (VGELEQQIGIGQPTLSQQLGVLRE).

Its function is as follows. Represses an operon that probably comprises itself, PD_1892, PD_1893, PD_1894 and blh. Binds to a palindromic AT-rich sequence spanning the -10 region of the blh promoter and blocks transcription of the operon. This is Biofilm growth-associated repressor (bigR) from Xylella fastidiosa (strain Temecula1 / ATCC 700964).